Reading from the N-terminus, the 349-residue chain is Heat-inducible transcription repressor HrcA (349 aa).

This sequence belongs to the HrcA family.

Functionally, negative regulator of class I heat shock genes (grpE-dnaK-dnaJ and groELS operons). Prevents heat-shock induction of these operons. The chain is Heat-inducible transcription repressor HrcA from Xylella fastidiosa (strain 9a5c).